Consider the following 429-residue polypeptide: Hemoglobinase (429 aa).

Residues 1–19 (MMLFSLFLISILHILLVKC) form the signal peptide. Residues 20–31 (QLDTNYEVSDET) constitute a propeptide that is removed on maturation. Residue His151 is part of the active site. Positions 288-309 (FQGSRDKSSSENDEPPMKPRHS) are disordered. A propeptide spanning residues 292–429 (RDKSSSENDE…INEAIIKICG (138 aa)) is cleaved from the precursor.

Belongs to the peptidase C13 family.

The catalysed reaction is Hydrolysis of proteins and small molecule substrates at -Asn-|-Xaa- bonds.. This protease is used by the parasite for degradation of the host globin. This is Hemoglobinase from Schistosoma mansoni (Blood fluke).